The sequence spans 114 residues: Secretoglobin family 2B member 2 (114 aa).

The N-terminal stretch at 1–23 (MKGTLLLLALLVTGELGFQRTEA) is a signal peptide.

This sequence belongs to the secretoglobin family. As to expression, expressed in lacrimal gland.

The protein localises to the secreted. The protein is Secretoglobin family 2B member 2 (Scgb2b2) of Mus musculus (Mouse).